Consider the following 513-residue polypeptide: Bifunctional pantoate ligase/cytidylate kinase (513 aa).

The pantoate--beta-alanine ligase stretch occupies residues 1–282 (MGTFHRLTTT…VGQTRLIDNC (282 aa)). 32–39 (MGALHGGH) is a binding site for ATP. The active-site Proton donor is histidine 39. Glutamine 63 is a (R)-pantoate binding site. Glutamine 63 contributes to the beta-alanine binding site. 152–155 (GQKD) contacts ATP. Residue glutamine 158 coordinates (R)-pantoate. ATP-binding positions include valine 181 and 189-192 (LSSR). The cytidylate kinase stretch occupies residues 283–513 (LLDRRRPILA…HLYRSRFPQP (231 aa)).

In the N-terminal section; belongs to the pantothenate synthetase family. The protein in the C-terminal section; belongs to the cytidylate kinase family. Type 1 subfamily.

It localises to the cytoplasm. The catalysed reaction is (R)-pantoate + beta-alanine + ATP = (R)-pantothenate + AMP + diphosphate + H(+). It carries out the reaction CMP + ATP = CDP + ADP. It catalyses the reaction dCMP + ATP = dCDP + ADP. Its pathway is cofactor biosynthesis; (R)-pantothenate biosynthesis; (R)-pantothenate from (R)-pantoate and beta-alanine: step 1/1. Catalyzes the condensation of pantoate with beta-alanine in an ATP-dependent reaction via a pantoyl-adenylate intermediate. Functionally, catalyzes the transfer of a phosphate group from ATP to either CMP or dCMP to form CDP or dCDP and ADP, respectively. This Thermosynechococcus vestitus (strain NIES-2133 / IAM M-273 / BP-1) protein is Bifunctional pantoate ligase/cytidylate kinase.